The following is a 47-amino-acid chain: Delta-actitoxin-Ael1a (47 aa).

3 disulfides stabilise this stretch: C4–C44, C6–C34, and C27–C45.

It belongs to the sea anemone sodium channel inhibitory toxin family. Type I subfamily. As to expression, expressed in ectodermal glands. Not expressed in nematocytes.

The protein resides in the secreted. Binds specifically to voltage-gated sodium channels (Nav), thereby delaying their inactivation during signal transduction. It strongly stimulates mammalian cardiac muscle contraction. Paralyzes the shore crab (C.maenas) by tetanic contractions after intramuscular injection. The protein is Delta-actitoxin-Ael1a of Anthopleura elegantissima (Green aggregating anemone).